A 404-amino-acid polypeptide reads, in one-letter code: L-cysteine:1D-myo-inositol 2-amino-2-deoxy-alpha-D-glucopyranoside ligase (404 aa).

Residues 1–20 are disordered; sequence MRTWPTPDVPPLPRTGAPAP. Residue cysteine 45 participates in Zn(2+) binding. L-cysteinyl-5'-AMP-binding positions include 45-48, threonine 60, and 83-85; these read CGIT and NVT. The short motif at 47–57 is the 'HIGH' region element; sequence ITPYDATHLGH. The 'ERGGDP' region signature appears at 185–190; the sequence is ERGGDP. The tract at residues 185 to 216 is disordered; the sequence is ERGGDPDRPGKKHPLDPALWRGEQPGEPSWDG. Basic and acidic residues predominate over residues 186-199; the sequence is RGGDPDRPGKKHPL. An L-cysteinyl-5'-AMP-binding site is contributed by tryptophan 226. Cysteine 230 lines the Zn(2+) pocket. 248 to 250 serves as a coordination point for L-cysteinyl-5'-AMP; that stretch reads GAD. Histidine 255 lines the Zn(2+) pocket. Residue leucine 280 coordinates L-cysteinyl-5'-AMP. The short motif at 286–290 is the 'KMSKS' region element; the sequence is KMSKS.

Belongs to the class-I aminoacyl-tRNA synthetase family. MshC subfamily. Monomer. Zn(2+) is required as a cofactor.

The catalysed reaction is 1D-myo-inositol 2-amino-2-deoxy-alpha-D-glucopyranoside + L-cysteine + ATP = 1D-myo-inositol 2-(L-cysteinylamino)-2-deoxy-alpha-D-glucopyranoside + AMP + diphosphate + H(+). Its function is as follows. Catalyzes the ATP-dependent condensation of GlcN-Ins and L-cysteine to form L-Cys-GlcN-Ins. This chain is L-cysteine:1D-myo-inositol 2-amino-2-deoxy-alpha-D-glucopyranoside ligase, found in Xylanimonas cellulosilytica (strain DSM 15894 / JCM 12276 / CECT 5975 / KCTC 9989 / LMG 20990 / NBRC 107835 / XIL07).